The sequence spans 240 residues: Methylthioribulose-1-phosphate dehydratase (240 aa).

Substrate is bound at residue C103. H121 and H123 together coordinate Zn(2+). Residue E144 is the Proton donor/acceptor of the active site. Residue H200 participates in Zn(2+) binding.

It belongs to the aldolase class II family. MtnB subfamily. Zn(2+) serves as cofactor.

Its subcellular location is the cytoplasm. It catalyses the reaction 5-(methylsulfanyl)-D-ribulose 1-phosphate = 5-methylsulfanyl-2,3-dioxopentyl phosphate + H2O. The protein operates within amino-acid biosynthesis; L-methionine biosynthesis via salvage pathway; L-methionine from S-methyl-5-thio-alpha-D-ribose 1-phosphate: step 2/6. Catalyzes the dehydration of methylthioribulose-1-phosphate (MTRu-1-P) into 2,3-diketo-5-methylthiopentyl-1-phosphate (DK-MTP-1-P). This Komagataella phaffii (strain GS115 / ATCC 20864) (Yeast) protein is Methylthioribulose-1-phosphate dehydratase.